A 138-amino-acid polypeptide reads, in one-letter code: Abscisic stress-ripening protein 5 (138 aa).

Basic residues predominate over residues 1–13; the sequence is MAEEKHHHHLFHH. Disordered stretches follow at residues 1–27 and 106–138; these read MAEE…DSYG and GAGG…HLFG.

It belongs to the abscisic acid and water stress-induced protein family.

The protein resides in the nucleus. Its subcellular location is the cytoplasm. Functionally, involved in tolerance to aluminum. Regulates the expression of different genes that collectively contribute to the protection of the cell in response to aluminum stress. This chain is Abscisic stress-ripening protein 5, found in Oryza sativa subsp. indica (Rice).